The sequence spans 605 residues: MRPKKDGLEDFLRLTPEIKKQLGSLVSDYCNVLNKEFTAGSVEITLRSYKICKAFINEAKAHGREWGGLMATLNICNFWAILRNNRVRRRAENAGNDACSIACPIVMRYVLDHLIVVTDRFFIQAPSNRVMIPATIGTAMYKLLKHSRVRAYTYSKVLGVDRAAIMASGKQVVEHLNRMEKEGLLSSKFKAFCKWVFTYPVLEEMFQTMVSSKTGHLTDDVKDVRALIKTLPRASYSSHAGQRSYVSGVLPACLLSTKSKAVETPILVSGADRMDEELMGNDGGASHTEARYSESGQFHAFTDELESLPSPTMPLKPGAQSADCGDSSSSSSDSGNSDTEQSEREEARAEAPRLRAPKSRRTSRPNRGQTPCPSNAEEPEQPWIAAVHQESDERPIFPHPSKPTFLPPVKRKKGLRDSREGMFLPKPEAGSAISDVFEGREVCQPKRIRPFHPPGSPWANRPLPASLAPTPTGPVHEPVGSLTPAPVPKPLDPAPAVTPEASHLLEDPDEETSQAVKALREMADTVIPQKEEAAICGQMDLNHPPPRGHLDELTTTLESMTEDLNLDSPLTPELNEILDTFLNDECLLHAMHISTGLSIFDTSLF.

Disordered stretches follow at residues 307–381 (SLPS…EPEQ) and 447–501 (RIRP…TPEA). Over residues 321–338 (SADCGDSSSSSSDSGNSD) the composition is skewed to low complexity. Residues 341 to 353 (QSEREEARAEAPR) are compositionally biased toward basic and acidic residues. Residues 355–364 (RAPKSRRTSR) are compositionally biased toward basic residues.

The protein belongs to the herpesviridae Rta family. As to quaternary structure, interacts with human ATF7IP protein, leading to promote and regulate host genes in virus-infected cells. Interacts with RNA polymerase III complex; this interaction downregulates small RNA transcription and 5'-pppRNA production.

It localises to the host nucleus. The protein localises to the virion tegument. Its function is as follows. Immediate-early transcription factor that controls the initiation of viral lytic gene expression and lytic reactivation from latency. Triggers lytic replication, and initiates a cellular senescence program in epithelial cells. Up-regulates human DCR3/TNFRSF6B by directly binding to its receptor. Globally induces a proteasome-dependent loss of SUMOylated proteins in the host cell and the loss of promeylocytic leukemia nuclear bodies. Improves the stability of the triplex capsid protein TRX1 by reducing the ubiquitination level of the latter. Mediates evasion of inflammasome activation and antiviral responses (T- and NK cell activation) during EBV early lytic infection. The sequence is that of Replication and transcription activator from Epstein-Barr virus (strain GD1) (HHV-4).